The sequence spans 83 residues: Cytochrome c oxidase subunit 7A2, mitochondrial (83 aa).

Residues 1–23 constitute a mitochondrion transit peptide; it reads MLRNLLALRQIGQRTISTASRRH. Topologically, residues 24–48 are mitochondrial matrix; the sequence is FKNKVPEKQKLFQEDDEIPLYLKGG. Lys33 is modified (N6-acetyllysine). A helical membrane pass occupies residues 49–77; the sequence is VADALLYRATMILTVGGTAYAIYELAVAS. Residues 78–83 are Mitochondrial intermembrane-facing; the sequence is FPKKQE.

It belongs to the cytochrome c oxidase VIIa family. Component of the cytochrome c oxidase (complex IV, CIV), a multisubunit enzyme composed of 14 subunits. The complex is composed of a catalytic core of 3 subunits MT-CO1, MT-CO2 and MT-CO3, encoded in the mitochondrial DNA, and 11 supernumerary subunits COX4I1 (or COX4I2), COX5A, COX5B, COX6A1 (or COX6A2), COX6B1 (or COX6B2), COX6C, COX7A2 (or COX7A1), COX7B, COX7C, COX8A and NDUFA4, which are encoded in the nuclear genome. The complex exists as a monomer or a dimer and forms supercomplexes (SCs) in the inner mitochondrial membrane with NADH-ubiquinone oxidoreductase (complex I, CI) and ubiquinol-cytochrome c oxidoreductase (cytochrome b-c1 complex, complex III, CIII), resulting in different assemblies (supercomplex SCI(1)III(2)IV(1) and megacomplex MCI(2)III(2)IV(2)). Interacts with PET100.

The protein localises to the mitochondrion inner membrane. The protein operates within energy metabolism; oxidative phosphorylation. In terms of biological role, component of the cytochrome c oxidase, the last enzyme in the mitochondrial electron transport chain which drives oxidative phosphorylation. The respiratory chain contains 3 multisubunit complexes succinate dehydrogenase (complex II, CII), ubiquinol-cytochrome c oxidoreductase (cytochrome b-c1 complex, complex III, CIII) and cytochrome c oxidase (complex IV, CIV), that cooperate to transfer electrons derived from NADH and succinate to molecular oxygen, creating an electrochemical gradient over the inner membrane that drives transmembrane transport and the ATP synthase. Cytochrome c oxidase is the component of the respiratory chain that catalyzes the reduction of oxygen to water. Electrons originating from reduced cytochrome c in the intermembrane space (IMS) are transferred via the dinuclear copper A center (CU(A)) of subunit 2 and heme A of subunit 1 to the active site in subunit 1, a binuclear center (BNC) formed by heme A3 and copper B (CU(B)). The BNC reduces molecular oxygen to 2 water molecules using 4 electrons from cytochrome c in the IMS and 4 protons from the mitochondrial matrix. The polypeptide is Cytochrome c oxidase subunit 7A2, mitochondrial (COX7A2) (Homo sapiens (Human)).